A 596-amino-acid chain; its full sequence is Aspartate--tRNA(Asp/Asn) ligase (596 aa).

Glu-175 is an L-aspartate binding site. The tract at residues 199 to 202 (QQYK) is aspartate. L-aspartate is bound by residues Arg-221 and His-454. 221-223 (RDE) contacts ATP. Glu-488 contacts ATP. Arg-495 is a binding site for L-aspartate. 540–543 (GVDR) lines the ATP pocket.

The protein belongs to the class-II aminoacyl-tRNA synthetase family. Type 1 subfamily. As to quaternary structure, homodimer.

It is found in the cytoplasm. It carries out the reaction tRNA(Asx) + L-aspartate + ATP = L-aspartyl-tRNA(Asx) + AMP + diphosphate. Its function is as follows. Aspartyl-tRNA synthetase with relaxed tRNA specificity since it is able to aspartylate not only its cognate tRNA(Asp) but also tRNA(Asn). Reaction proceeds in two steps: L-aspartate is first activated by ATP to form Asp-AMP and then transferred to the acceptor end of tRNA(Asp/Asn). This chain is Aspartate--tRNA(Asp/Asn) ligase, found in Bartonella henselae (strain ATCC 49882 / DSM 28221 / CCUG 30454 / Houston 1) (Rochalimaea henselae).